The primary structure comprises 91 residues: Non-specific lipid-transfer protein 1 (91 aa).

Disulfide bonds link Cys4/Cys51, Cys14/Cys28, Cys29/Cys74, and Cys49/Cys88.

It belongs to the plant LTP family. As to expression, detected in seeds (at protein level).

Its function is as follows. Plant non-specific lipid-transfer proteins transfer phospholipids as well as galactolipids across membranes. May play a role in wax or cutin deposition in the cell walls of expanding epidermal cells and certain secretory tissues. The sequence is that of Non-specific lipid-transfer protein 1 from Carum carvi (Caraway).